The chain runs to 1188 residues: DNA-directed RNA polymerase subunit beta (1188 aa).

The protein belongs to the RNA polymerase beta chain family. The RNAP catalytic core consists of 2 alpha, 1 beta, 1 beta' and 1 omega subunit. When a sigma factor is associated with the core the holoenzyme is formed, which can initiate transcription.

It carries out the reaction RNA(n) + a ribonucleoside 5'-triphosphate = RNA(n+1) + diphosphate. Functionally, DNA-dependent RNA polymerase catalyzes the transcription of DNA into RNA using the four ribonucleoside triphosphates as substrates. The sequence is that of DNA-directed RNA polymerase subunit beta from Streptococcus pyogenes serotype M1.